The primary structure comprises 115 residues: Meiotically up-regulated gene 106 protein (115 aa).

The signal sequence occupies residues 1 to 34 (MSIKVEWIKFTRLKKCATLLVQLSLLRYRYMVLA). The next 2 helical transmembrane spans lie at 41-60 (CIVV…GALF) and 81-103 (GVKL…FTPY).

The protein resides in the membrane. Its function is as follows. Has a role in meiosis. This Schizosaccharomyces pombe (strain 972 / ATCC 24843) (Fission yeast) protein is Meiotically up-regulated gene 106 protein (mug106).